A 432-amino-acid polypeptide reads, in one-letter code: Succinate--CoA ligase [GDP-forming] subunit beta, mitochondrial (432 aa).

The N-terminal 37 residues, 1–37 (MAAPVGAQARKLLRDLVLRPPLLAARSQVVQLTSRRW), are a transit peptide targeting the mitochondrion. Residues 46 to 274 (KKLMSDNGVK…NAEFRQKDIF (229 aa)) form the ATP-grasp domain. Gln-57 provides a ligand contact to GTP. Position 73 is an N6-acetyllysine (Lys-73). Lys-78 is modified (N6-succinyllysine). Residue 90-92 (GRG) coordinates GTP. N6-acetyllysine occurs at positions 111, 132, and 139. Residue Leu-146 participates in GTP binding. Ser-161 carries the post-translational modification Phosphoserine. Residues Lys-200, Lys-218, and Lys-227 each carry the N6-acetyllysine modification. Residues Asn-243 and Asp-257 each contribute to the Mg(2+) site. Lys-271 carries the N6-acetyllysine modification. Asn-308 contributes to the substrate binding site. Lys-338 carries the N6-succinyllysine modification. Lys-347 carries the post-translational modification N6-acetyllysine. 365–367 (GIV) is a substrate binding site. An N6-acetyllysine mark is found at Lys-386 and Lys-423.

The protein belongs to the succinate/malate CoA ligase beta subunit family. GTP-specific subunit beta subfamily. Heterodimer of an alpha and a beta subunit. The beta subunit determines specificity for GTP. Mg(2+) is required as a cofactor.

Its subcellular location is the mitochondrion. The enzyme catalyses GTP + succinate + CoA = succinyl-CoA + GDP + phosphate. The protein operates within carbohydrate metabolism; tricarboxylic acid cycle; succinate from succinyl-CoA (ligase route): step 1/1. GTP-specific succinyl-CoA synthetase functions in the citric acid cycle (TCA), coupling the hydrolysis of succinyl-CoA to the synthesis of GTP and thus represents the only step of substrate-level phosphorylation in the TCA. The beta subunit provides nucleotide specificity of the enzyme and binds the substrate succinate, while the binding sites for coenzyme A and phosphate are found in the alpha subunit. The sequence is that of Succinate--CoA ligase [GDP-forming] subunit beta, mitochondrial from Bos taurus (Bovine).